The chain runs to 229 residues: Aquaporin Z (229 aa).

2 helical membrane-spanning segments follow: residues F8–V28 and I33–I53. The NPA 1 signature appears at N62–A64. 3 helical membrane-spanning segments follow: residues L81–I101, A131–T151, and G158–V178. The NPA 2 signature appears at N184 to A186. Residues A199 to L219 form a helical membrane-spanning segment.

It belongs to the MIP/aquaporin (TC 1.A.8) family. In terms of assembly, homotetramer.

Its subcellular location is the cell inner membrane. The catalysed reaction is H2O(in) = H2O(out). In terms of biological role, channel that permits osmotically driven movement of water in both directions. It is involved in the osmoregulation and in the maintenance of cell turgor during volume expansion in rapidly growing cells. It mediates rapid entry or exit of water in response to abrupt changes in osmolarity. The chain is Aquaporin Z from Pseudomonas aeruginosa (strain ATCC 15692 / DSM 22644 / CIP 104116 / JCM 14847 / LMG 12228 / 1C / PRS 101 / PAO1).